A 98-amino-acid polypeptide reads, in one-letter code: Tax1-binding protein 3 (98 aa).

Ser2 bears the N-acetylserine mark. The 76-residue stretch at 12–87 folds into the PDZ domain; the sequence is VVQRVEIHKL…VVRLLVTRQS (76 aa).

As to quaternary structure, interacts (via its PDZ domain) with GLS2. Interacts (via its PDZ domain) with RTKN (via the C-terminal region); this interaction facilitates Rho-mediated activation of the FOS serum response element (SRE). Interacts (via PDZ domain) with ARHGEF16. Interacts (via PDZ domain) with KCNJ4 (via C-terminus). Competes with LIN7A for KCNJ4 binding. Interacts (via its PDZ domain) with CTNNB1; this interaction inhibits the transcriptional activity of CTNNB1. Interacts with ADGRB2. Detected in kidney distal convoluted tubules (at protein level).

It is found in the cytoplasm. Its subcellular location is the nucleus. It localises to the cell membrane. Its function is as follows. May regulate a number of protein-protein interactions by competing for PDZ domain binding sites. Binds CTNNB1 and may thereby act as an inhibitor of the Wnt signaling pathway. Competes with LIN7A for KCNJ4 binding, and thereby promotes KCNJ4 internalization. May play a role in the Rho signaling pathway. The protein is Tax1-binding protein 3 of Rattus norvegicus (Rat).